The primary structure comprises 887 residues: Lateral signaling target protein 2 homolog (887 aa).

Residue Lys-87 forms a Glycyl lysine isopeptide (Lys-Gly) (interchain with G-Cter in ubiquitin) linkage. The tract at residues 308 to 327 is disordered; sequence PALSAPLPPEGPLSAKAKDP. Ser-334 is subject to Phosphoserine. 2 disordered regions span residues 354-396 and 412-474; these read DEMS…GSDE and ALAR…ASLA. Thr-516 carries the phosphothreonine modification. Ser-586 bears the Phosphoserine; by MAP2K mark. The disordered stretch occupies residues 599-714; that stretch reads LAKASDRAPE…THAAPQATRE (116 aa). Basic and acidic residues predominate over residues 602–612; that stretch reads ASDRAPERQEE. A compositionally biased stretch (polar residues) spans 638-648; it reads TSGSQVDTASG. 2 stretches are compositionally biased toward low complexity: residues 681–693 and 700–711; these read SGSS…SCSS and AAPAATHAAPQA. The FYVE-type zinc finger occupies 817–879; it reads DEACGFCTAC…THCYMFHVTP (63 aa). Zn(2+) is bound by residues Cys-823, Cys-826, Cys-839, Cys-842, Cys-847, Cys-850, and Cys-869. Position 870 is a phosphothreonine; by MAP2K (Thr-870). A Zn(2+)-binding site is contributed by Cys-872.

Belongs to the lst-2 family. Interacts with TRIM3. Monoubiquitination at Lys-87 prevents binding to phosphatidylinositol 3-phosphate (PI3P) and localization to early endosome membranes.

It localises to the cytoplasm. It is found in the cytosol. The protein localises to the early endosome membrane. Its function is as follows. Negative regulator of epidermal growth factor receptor (EGFR) signaling. Acts by promoting EGFR degradation in endosomes when not monoubiquitinated. This chain is Lateral signaling target protein 2 homolog (ZFYVE28), found in Homo sapiens (Human).